The chain runs to 343 residues: MNKPFIDVLAGQRQSAPPVWMMRQAGRYLPEYREVRAKAGGFLDLCFNPEMAAEVTLQPIRRFGFDAAIIFSDILVIPHALGRSVRFEVGEGPRLDPLDTPEKIATLAGHADLTKLDAVFEALRRVRAELPKSTALIGFCGAPWTVATYMVAGQGTPDQAPARLLAYAQPEAFSRIIDALVESSIAYLLKQLEAGADALQIFDTWAGVLSPREFARWSAAPTRRIVEGVRNARPDAKIIGFPRGAGALLPGYVAETAVDAVSIDWTAEPSLVRERVQSKVAVQGNLDPLALMTGGAALDQAVDDVLASYAGGRHIFNLGHGILPETPIAHVEQMLKRVRAYKG.

Residues 23-27 (RQAGR), Asp73, Tyr149, Thr204, and His320 contribute to the substrate site.

This sequence belongs to the uroporphyrinogen decarboxylase family. As to quaternary structure, homodimer.

The protein resides in the cytoplasm. It catalyses the reaction uroporphyrinogen III + 4 H(+) = coproporphyrinogen III + 4 CO2. It participates in porphyrin-containing compound metabolism; protoporphyrin-IX biosynthesis; coproporphyrinogen-III from 5-aminolevulinate: step 4/4. Functionally, catalyzes the decarboxylation of four acetate groups of uroporphyrinogen-III to yield coproporphyrinogen-III. The protein is Uroporphyrinogen decarboxylase of Bradyrhizobium sp. (strain BTAi1 / ATCC BAA-1182).